A 500-amino-acid chain; its full sequence is Na(+)/H(+) antiporter NhaB (500 aa).

A run of 12 helical transmembrane segments spans residues 28–50, 58–78, 96–116, 129–149, 150–170, 205–225, 241–261, 311–331, 350–370, 394–414, 449–469, and 477–497; these read FLML…LLVI, MALK…ALLL, VILL…LLLF, ALLA…LDAL, TVTA…HRVA, LLMH…VGEP, FFLK…VTCL, ILIA…LMVI, FKDA…VAVI, MLFI…VATI, VATP…IAPL, and MVWM…YAVS.

Belongs to the NhaB Na(+)/H(+) (TC 2.A.34) antiporter family.

Its subcellular location is the cell inner membrane. It catalyses the reaction 2 Na(+)(in) + 3 H(+)(out) = 2 Na(+)(out) + 3 H(+)(in). Na(+)/H(+) antiporter that extrudes sodium in exchange for external protons. The chain is Na(+)/H(+) antiporter NhaB from Pseudomonas fluorescens (strain Pf0-1).